The following is an 874-amino-acid chain: Probable inorganic carbon transporter subunit DabA (874 aa).

Zn(2+) contacts are provided by Cys-398, Asp-400, His-580, and Cys-595.

It belongs to the inorganic carbon transporter (TC 9.A.2) DabA family. In terms of assembly, forms a complex with DabB. Zn(2+) is required as a cofactor.

It is found in the cell membrane. In terms of biological role, part of an energy-coupled inorganic carbon pump. This Bacillus thuringiensis subsp. konkukian (strain 97-27) protein is Probable inorganic carbon transporter subunit DabA.